The chain runs to 98 residues: NADH-ubiquinone oxidoreductase chain 4L (98 aa).

3 consecutive transmembrane segments (helical) span residues 1 to 21, 29 to 49, and 61 to 81; these read MSLT…GLLM, SLLC…MVIL, and IILL…LVMV.

Belongs to the complex I subunit 4L family. Core subunit of respiratory chain NADH dehydrogenase (Complex I) which is composed of 45 different subunits.

It localises to the mitochondrion inner membrane. It carries out the reaction a ubiquinone + NADH + 5 H(+)(in) = a ubiquinol + NAD(+) + 4 H(+)(out). Its function is as follows. Core subunit of the mitochondrial membrane respiratory chain NADH dehydrogenase (Complex I) which catalyzes electron transfer from NADH through the respiratory chain, using ubiquinone as an electron acceptor. Part of the enzyme membrane arm which is embedded in the lipid bilayer and involved in proton translocation. The polypeptide is NADH-ubiquinone oxidoreductase chain 4L (MT-ND4L) (Vampyressa thyone (Northern little yellow-eared bat)).